Consider the following 391-residue polypeptide: Fructose-bisphosphate aldolase 3, chloroplastic (391 aa).

The transit peptide at 1 to 40 (MASASFVKPNTLSSPWIGQRSFAHTSASSSPPPRVSFAIR) directs the protein to the chloroplast. Arg-88 is a binding site for substrate. Ser-150 bears the Phosphoserine mark. Lys-178 provides a ligand contact to substrate. The residue at position 208 (Ser-208) is a Phosphoserine. Catalysis depends on Glu-218, which acts as the Proton acceptor. Lys-260 (schiff-base intermediate with dihydroxyacetone-P) is an active-site residue. A substrate-binding site is contributed by 302–304 (SGG). Lys-387 carries the post-translational modification N6,N6,N6-trimethyllysine.

This sequence belongs to the class I fructose-bisphosphate aldolase family. In terms of assembly, homotetramer. In terms of processing, can be trimethylated at Lys-387 by LSMT-L, but the trimethylation has no effect in vitro. S-glutathionylated. Expressed in roots, and at low levels in rosettes leaves, cauline leaves, stems and flowers.

The protein resides in the plastid. It is found in the chloroplast. It localises to the plastoglobule. The catalysed reaction is beta-D-fructose 1,6-bisphosphate = D-glyceraldehyde 3-phosphate + dihydroxyacetone phosphate. The protein operates within carbohydrate degradation; glycolysis; D-glyceraldehyde 3-phosphate and glycerone phosphate from D-glucose: step 4/4. Its function is as follows. Plays a key role in glycolysis and gluconeogenesis. The protein is Fructose-bisphosphate aldolase 3, chloroplastic of Arabidopsis thaliana (Mouse-ear cress).